The following is a 152-amino-acid chain: 6,7-dimethyl-8-ribityllumazine synthase (152 aa).

5-amino-6-(D-ribitylamino)uracil contacts are provided by residues phenylalanine 24, 56–58 (SFE), and 80–82 (VVV). 85 to 86 (ET) contributes to the (2S)-2-hydroxy-3-oxobutyl phosphate binding site. Histidine 88 acts as the Proton donor in catalysis. A 5-amino-6-(D-ribitylamino)uracil-binding site is contributed by phenylalanine 113. Arginine 127 contacts (2S)-2-hydroxy-3-oxobutyl phosphate.

It belongs to the DMRL synthase family.

It catalyses the reaction (2S)-2-hydroxy-3-oxobutyl phosphate + 5-amino-6-(D-ribitylamino)uracil = 6,7-dimethyl-8-(1-D-ribityl)lumazine + phosphate + 2 H2O + H(+). It participates in cofactor biosynthesis; riboflavin biosynthesis; riboflavin from 2-hydroxy-3-oxobutyl phosphate and 5-amino-6-(D-ribitylamino)uracil: step 1/2. Its function is as follows. Catalyzes the formation of 6,7-dimethyl-8-ribityllumazine by condensation of 5-amino-6-(D-ribitylamino)uracil with 3,4-dihydroxy-2-butanone 4-phosphate. This is the penultimate step in the biosynthesis of riboflavin. This is 6,7-dimethyl-8-ribityllumazine synthase from Thermococcus onnurineus (strain NA1).